The sequence spans 282 residues: N-acetylaspartate synthetase (282 aa).

A helical membrane pass occupies residues 103-125 (FLTVMCYVMTKSFTLTFCAPFIL). The 160-residue stretch at 110–269 (VMTKSFTLTF…RSPLERLFFQ (160 aa)) folds into the N-acetyltransferase domain.

This sequence belongs to the NAT8 family.

It is found in the cytoplasm. It localises to the microsome membrane. The protein resides in the mitochondrion membrane. Its subcellular location is the endoplasmic reticulum membrane. The catalysed reaction is L-aspartate + acetyl-CoA = N-acetyl-L-aspartate + CoA + H(+). Functionally, catalyzes the synthesis of N-acetylaspartate acid (NAA) from L-aspartate and acetyl-CoA. This Danio rerio (Zebrafish) protein is N-acetylaspartate synthetase (nat8l).